Here is a 292-residue protein sequence, read N- to C-terminus: 5,10-methylenetetrahydrofolate reductase (292 aa).

The active-site Proton donor/acceptor is the Glu-26. Thr-57 is a binding site for NADH. Tyr-58, Ala-60, His-86, Arg-116, Gly-117, Asp-118, Ala-130, Tyr-150, His-154, Ala-157, Asp-163, Asn-166, Arg-169, and Lys-170 together coordinate FAD. Asp-118 is a (6S)-5-methyl-5,6,7,8-tetrahydrofolate binding site. Gln-181 is a binding site for NADH. Gln-181, Gln-217, and Arg-277 together coordinate (6S)-5-methyl-5,6,7,8-tetrahydrofolate.

The protein belongs to the methylenetetrahydrofolate reductase family. Requires FAD as cofactor.

It carries out the reaction (6S)-5-methyl-5,6,7,8-tetrahydrofolate + NAD(+) = (6R)-5,10-methylene-5,6,7,8-tetrahydrofolate + NADH + H(+). It functions in the pathway one-carbon metabolism; tetrahydrofolate interconversion. Its pathway is amino-acid biosynthesis; L-methionine biosynthesis via de novo pathway. Catalyzes the NADH-dependent reduction of 5,10-methylenetetrahydrofolate to 5-methyltetrahydrofolate. Is required to provide the methyl group necessary for methionine synthetase to convert homocysteine to methionine; the methyl group is given by 5-methyltetrahydrofolate. The sequence is that of 5,10-methylenetetrahydrofolate reductase (metF) from Neisseria meningitidis serogroup B (strain ATCC BAA-335 / MC58).